Reading from the N-terminus, the 368-residue chain is MDNLKKTPLFDLYKKYNGKIIDFAGWALPVQFESIISEHEAVRNAAGLFDVSHMGEITVKGREAFNFLQNLITNDLSKLKDNQVFYTFMCNYNGGVVDDLLVYKYSDEHFLLVVNAANIEKDYKWMKDNKGVYEVEINNISDEISELAVQGPKAEEILQKLTYTDLSEIKFFYFKDNVKIAGIECLVSRTGYTGEDGFEIYMPNKYAVELWEKIIEVGKEYGLKPAGLGARDTLRFEAGLPLYGNELSEEITPLEAGFEFFVKFDKGNFIGKDALLKQKEEGLKRKIVGFEMIDNGIPRHGYEVRADNQKIGYVTTGYFSPTLKKNIGLALIDSKYAQLGNQIEIVIRNKPLKALIISKNFYKKNYKK.

Belongs to the GcvT family. In terms of assembly, the glycine cleavage system is composed of four proteins: P, T, L and H.

It catalyses the reaction N(6)-[(R)-S(8)-aminomethyldihydrolipoyl]-L-lysyl-[protein] + (6S)-5,6,7,8-tetrahydrofolate = N(6)-[(R)-dihydrolipoyl]-L-lysyl-[protein] + (6R)-5,10-methylene-5,6,7,8-tetrahydrofolate + NH4(+). The glycine cleavage system catalyzes the degradation of glycine. This Thermoanaerobacter pseudethanolicus (strain ATCC 33223 / 39E) (Clostridium thermohydrosulfuricum) protein is Aminomethyltransferase.